The following is a 137-amino-acid chain: NADPH-dependent 7-cyano-7-deazaguanine reductase (137 aa).

Cysteine 50 (thioimide intermediate) is an active-site residue. Catalysis depends on aspartate 57, which acts as the Proton donor. Substrate is bound by residues 72-74 (VEL) and 91-92 (HE).

Belongs to the GTP cyclohydrolase I family. QueF type 1 subfamily.

It localises to the cytoplasm. The catalysed reaction is 7-aminomethyl-7-carbaguanine + 2 NADP(+) = 7-cyano-7-deazaguanine + 2 NADPH + 3 H(+). It functions in the pathway tRNA modification; tRNA-queuosine biosynthesis. Catalyzes the NADPH-dependent reduction of 7-cyano-7-deazaguanine (preQ0) to 7-aminomethyl-7-deazaguanine (preQ1). The protein is NADPH-dependent 7-cyano-7-deazaguanine reductase of Synechocystis sp. (strain ATCC 27184 / PCC 6803 / Kazusa).